Reading from the N-terminus, the 316-residue chain is Methionyl-tRNA formyltransferase (316 aa).

110-113 serves as a coordination point for (6S)-5,6,7,8-tetrahydrofolate; the sequence is SLLP.

It belongs to the Fmt family.

It catalyses the reaction L-methionyl-tRNA(fMet) + (6R)-10-formyltetrahydrofolate = N-formyl-L-methionyl-tRNA(fMet) + (6S)-5,6,7,8-tetrahydrofolate + H(+). Its function is as follows. Attaches a formyl group to the free amino group of methionyl-tRNA(fMet). The formyl group appears to play a dual role in the initiator identity of N-formylmethionyl-tRNA by promoting its recognition by IF2 and preventing the misappropriation of this tRNA by the elongation apparatus. The protein is Methionyl-tRNA formyltransferase of Bacillus licheniformis (strain ATCC 14580 / DSM 13 / JCM 2505 / CCUG 7422 / NBRC 12200 / NCIMB 9375 / NCTC 10341 / NRRL NRS-1264 / Gibson 46).